The primary structure comprises 339 residues: UPF0324 membrane protein SpyM3_0740 (339 aa).

Transmembrane regions (helical) follow at residues 7–24 (KLPG…AWYL), 28–50 (FPII…FYHH), 57–79 (GISF…GLNL), 84–106 (AVGM…VAYG), 118–140 (ATLV…APVI), 150–172 (AISV…GQLL), 256–275 (FILF…SLGV), 290–307 (FIVM…LVKL), and 314–336 (AILL…QLSL).

This sequence belongs to the UPF0324 family.

It is found in the cell membrane. The chain is UPF0324 membrane protein SpyM3_0740 from Streptococcus pyogenes serotype M3 (strain ATCC BAA-595 / MGAS315).